A 62-amino-acid polypeptide reads, in one-letter code: Small ribosomal subunit protein bS21C (62 aa).

Positions 43-62 (EKSKRKKLALHKQSKRRFRT) are disordered. The segment covering 45–62 (SKRKKLALHKQSKRRFRT) has biased composition (basic residues).

This sequence belongs to the bacterial ribosomal protein bS21 family.

This Trichormus variabilis (strain ATCC 29413 / PCC 7937) (Anabaena variabilis) protein is Small ribosomal subunit protein bS21C.